The sequence spans 186 residues: Astacin-like metalloprotease toxin 5 (186 aa).

The Peptidase M12A domain occupies 1–186 (NAVKYDQQLW…CHSKRKAELL (186 aa)). 2 disulfide bridges follow: cysteine 42-cysteine 177 and cysteine 63-cysteine 84. Histidine 92 contributes to the Zn(2+) binding site. The active site involves glutamate 93. Histidine 96 and histidine 102 together coordinate Zn(2+). Residue asparagine 122 is glycosylated (N-linked (GlcNAc...) asparagine).

In terms of assembly, monomer. Zn(2+) serves as cofactor. As to expression, expressed by the venom gland.

The protein localises to the secreted. Its activity is regulated as follows. Inhibited by 1,10-phenanthroline. Functionally, zinc metalloprotease. Provoques deadhesion of endothelial cells from cell cultures, and also degradation of fibronectin, fibrinogen and gelatin in vitro. Its role in the venom is not fully understood but it might act as a spreading factor that facilitates diffusion of other venom toxins. Alternatively, it might be involved in the proteolytic processing of other venom toxins or it might play a role in extra-oral digestion of prey. This Loxosceles gaucho (Spider) protein is Astacin-like metalloprotease toxin 5.